The chain runs to 92 residues: Small ribosomal subunit protein uS19c (92 aa).

This sequence belongs to the universal ribosomal protein uS19 family.

The protein resides in the plastid. Its subcellular location is the chloroplast. In terms of biological role, protein S19 forms a complex with S13 that binds strongly to the 16S ribosomal RNA. This is Small ribosomal subunit protein uS19c (rps19) from Marchantia polymorpha (Common liverwort).